Here is a 124-residue protein sequence, read N- to C-terminus: Ribonuclease pancreatic (124 aa).

Over residues 1–13 (KESAAAKFERQHM) the composition is skewed to basic and acidic residues. The disordered stretch occupies residues 1 to 24 (KESAAAKFERQHMDSSTSSASSSN). Substrate is bound by residues Lys-7 and Arg-10. His-12 acts as the Proton acceptor in catalysis. Disulfide bonds link Cys-26–Cys-84, Cys-40–Cys-95, Cys-58–Cys-110, and Cys-65–Cys-72. Substrate-binding positions include 41-45 (KPVNT), Lys-66, and Arg-85. The active-site Proton donor is His-119.

Belongs to the pancreatic ribonuclease family. As to quaternary structure, monomer. Interacts with and forms tight 1:1 complexes with RNH1. Dimerization of two such complexes may occur. Interaction with RNH1 inhibits this protein. Pancreas.

The protein resides in the secreted. It carries out the reaction an [RNA] containing cytidine + H2O = an [RNA]-3'-cytidine-3'-phosphate + a 5'-hydroxy-ribonucleotide-3'-[RNA].. The enzyme catalyses an [RNA] containing uridine + H2O = an [RNA]-3'-uridine-3'-phosphate + a 5'-hydroxy-ribonucleotide-3'-[RNA].. In terms of biological role, endonuclease that catalyzes the cleavage of RNA on the 3' side of pyrimidine nucleotides. Acts on single-stranded and double-stranded RNA. This is Ribonuclease pancreatic (RNASE1) from Connochaetes taurinus (Blue wildebeest).